The primary structure comprises 158 residues: Transcription elongation factor GreA (158 aa).

Basic and acidic residues predominate over residues 24 to 43; that stretch reads DVERPKASEAIGEARDKGDL. A disordered region spans residues 24 to 47; sequence DVERPKASEAIGEARDKGDLSENA. The stretch at 48–68 forms a coiled coil; the sequence is EYDAAKEAQGLLEMKISKMEE.

This sequence belongs to the GreA/GreB family.

Its function is as follows. Necessary for efficient RNA polymerase transcription elongation past template-encoded arresting sites. The arresting sites in DNA have the property of trapping a certain fraction of elongating RNA polymerases that pass through, resulting in locked ternary complexes. Cleavage of the nascent transcript by cleavage factors such as GreA or GreB allows the resumption of elongation from the new 3'terminus. GreA releases sequences of 2 to 3 nucleotides. The protein is Transcription elongation factor GreA of Christiangramia forsetii (strain DSM 17595 / CGMCC 1.15422 / KT0803) (Gramella forsetii).